The chain runs to 416 residues: 3-isopropylmalate dehydratase large subunit 2 (416 aa).

[4Fe-4S] cluster is bound by residues Cys296, Cys356, and Cys359.

Belongs to the aconitase/IPM isomerase family. LeuC type 2 subfamily. As to quaternary structure, heterodimer of LeuC and LeuD. Requires [4Fe-4S] cluster as cofactor.

The catalysed reaction is (2R,3S)-3-isopropylmalate = (2S)-2-isopropylmalate. It functions in the pathway amino-acid biosynthesis; L-leucine biosynthesis; L-leucine from 3-methyl-2-oxobutanoate: step 2/4. Functionally, catalyzes the isomerization between 2-isopropylmalate and 3-isopropylmalate, via the formation of 2-isopropylmaleate. This Archaeoglobus fulgidus (strain ATCC 49558 / DSM 4304 / JCM 9628 / NBRC 100126 / VC-16) protein is 3-isopropylmalate dehydratase large subunit 2.